Reading from the N-terminus, the 345-residue chain is NADPH dehydrogenase (345 aa).

Position 23-26 (Ser-23–Cys-26) interacts with FMN. Tyr-28 serves as a coordination point for substrate. Residues Ala-60 and Gln-102 each contribute to the FMN site. A substrate-binding site is contributed by His-164–His-167. FMN is bound by residues Arg-215 and Gly-307–Arg-308.

It belongs to the NADH:flavin oxidoreductase/NADH oxidase family. NamA subfamily. As to quaternary structure, homotetramer. The cofactor is FMN.

It catalyses the reaction A + NADPH + H(+) = AH2 + NADP(+). Its function is as follows. Catalyzes the reduction of the double bond of an array of alpha,beta-unsaturated aldehydes and ketones. It also reduces the nitro group of nitroester and nitroaromatic compounds. It could have a role in detoxification processes. This Bacillus cereus (strain AH187) protein is NADPH dehydrogenase.